Consider the following 360-residue polypeptide: Protein Wnt-2 (360 aa).

The N-terminal stretch at 1–25 is a signal peptide; sequence MNAPLGGIWLWLPLLLTWLTPEVNS. Cystine bridges form between Cys-76–Cys-87, Cys-127–Cys-135, Cys-137–Cys-157, Cys-206–Cys-220, Cys-208–Cys-215, Cys-278–Cys-309, Cys-294–Cys-304, Cys-308–Cys-348, Cys-324–Cys-339, Cys-326–Cys-336, and Cys-331–Cys-332. The O-palmitoleoyl serine; by PORCN moiety is linked to residue Ser-212. Residue Asn-295 is glycosylated (N-linked (GlcNAc...) asparagine).

This sequence belongs to the Wnt family. Palmitoleoylation is required for efficient binding to frizzled receptors. Depalmitoleoylation leads to Wnt signaling pathway inhibition. Expressed in brain in the thalamus, in fetal and adult lung and in placenta.

The protein resides in the secreted. The protein localises to the extracellular space. It localises to the extracellular matrix. Functionally, ligand for members of the frizzled family of seven transmembrane receptors. Functions in the canonical Wnt signaling pathway that results in activation of transcription factors of the TCF/LEF family. Functions as a upstream regulator of FGF10 expression. Plays an important role in embryonic lung development. May contribute to embryonic brain development by regulating the proliferation of dopaminergic precursors and neurons. This chain is Protein Wnt-2 (WNT2), found in Homo sapiens (Human).